The chain runs to 548 residues: MDSQRNLFLIAFLFVSFMIWQAWQTDNAPQPLQTQTTQNTTSAAGDAVNQGVPASGQGKTITVKTDVLSLNINTRGGDIDQAQLLTYPDKLGSDQPFLLLESTPGFLYQAQSGLTGRNGPDNPANGARPLYTSGQDHFELANGQGELRIPLTFTAENGVTYTKTFVLKRGEYAIGVDYQINNTTQQPLEVSMFGQLKQTIDLPKHRDTGSSNFALHTFRGAAYSSSETNYEKYKFDTIRDNENLSTTTNNGWVAMLQQYFATAWVPQTAGSNTLYTSNLGNGVAAIGYKSAPVIVAAGSQQQLAATLWVGPEIQDKMAAVAPHLDLTVDYGWLWFISQPLFKLLKFLHGFIGNWGFSIIVITFIVRGIMYPLTKAQYTSMAKMRMLQPKIQAMRERLGDDKQRMSQEMMALYKAEKVNPLGGCLPLVIQMPIFLALYYMLMGSVELRHAPFALWIHDLAAQDPYYILPILMGVTMFFIQKMSPTTVTDPMQQKIMTFMPVIFTVFFLWFPSGLVLYYIVSNLVTILQQQLIYRGLEKRGLHSRDKKKA.

A helical transmembrane segment spans residues N6–D26. The tract at residues Q30 to P53 is disordered. 4 consecutive transmembrane segments (helical) span residues K345 to V365, L420 to L440, L458 to I478, and P499 to V519.

Belongs to the OXA1/ALB3/YidC family. Type 1 subfamily. Interacts with the Sec translocase complex via SecD. Specifically interacts with transmembrane segments of nascent integral membrane proteins during membrane integration.

The protein localises to the cell inner membrane. In terms of biological role, required for the insertion and/or proper folding and/or complex formation of integral membrane proteins into the membrane. Involved in integration of membrane proteins that insert both dependently and independently of the Sec translocase complex, as well as at least some lipoproteins. Aids folding of multispanning membrane proteins. This chain is Membrane protein insertase YidC, found in Erwinia tasmaniensis (strain DSM 17950 / CFBP 7177 / CIP 109463 / NCPPB 4357 / Et1/99).